Consider the following 234-residue polypeptide: Cyclin-J18 (234 aa).

It belongs to the cyclin family.

The protein is Cyclin-J18 (CYCJ18) of Arabidopsis thaliana (Mouse-ear cress).